The sequence spans 441 residues: Arginine biosynthesis bifunctional protein ArgJ, mitochondrial (441 aa).

Substrate is bound by residues Thr-178, Lys-204, Thr-215, Glu-304, Asn-436, and Ser-441. The active-site Nucleophile is the Thr-215.

It belongs to the ArgJ family. Heterodimer of an alpha and a beta chain. The alpha and beta chains are autoproteolytically processed from a single precursor protein within the mitochondrion.

It is found in the mitochondrion matrix. It catalyses the reaction N(2)-acetyl-L-ornithine + L-glutamate = N-acetyl-L-glutamate + L-ornithine. The enzyme catalyses L-glutamate + acetyl-CoA = N-acetyl-L-glutamate + CoA + H(+). It functions in the pathway amino-acid biosynthesis; L-arginine biosynthesis; L-ornithine and N-acetyl-L-glutamate from L-glutamate and N(2)-acetyl-L-ornithine (cyclic): step 1/1. Its pathway is amino-acid biosynthesis; L-arginine biosynthesis; N(2)-acetyl-L-ornithine from L-glutamate: step 1/4. Catalyzes two activities which are involved in the cyclic version of arginine biosynthesis: the synthesis of acetylglutamate from glutamate and acetyl-CoA, and of ornithine by transacetylation between acetylornithine and glutamate. The polypeptide is Arginine biosynthesis bifunctional protein ArgJ, mitochondrial (Lodderomyces elongisporus (strain ATCC 11503 / CBS 2605 / JCM 1781 / NBRC 1676 / NRRL YB-4239) (Yeast)).